A 288-amino-acid polypeptide reads, in one-letter code: MSSSVLVLTSPGFASKEESLKKVFDLIDNGASRELQMIDRVQSQLVNLPINRYDSVIAAIDDGAWSSTLGPILSQAFASVHPGGTLRVYSTADEADESFEMTALLSGWLIESKSPWILSRPNQVEAVPIKLSNKNGQSASKNKILDFLKSDKENLISGDDDQELIDEDELLDESAHDNVLKVPECKPEPGKKKRACKNCTCGLREMEEHESSKTSAQLEAVKLTDTTEVDFTEKLKSKNAVSSCGNCYLGDAFRCSGCPYIGMPAFNPGDTVILAENRDKMSWMADDI.

Residues 1 to 127 (MSSSVLVLTS…LSRPNQVEAV (127 aa)) form an N-terminal SAM-like domain region. Positions 128–177 (PIKLSNKNGQSASKNKILDFLKSDKENLISGDDDQELIDEDELLDESAHD) are linker. Residues cysteine 185, cysteine 196, cysteine 199, and cysteine 201 each contribute to the [2Fe-2S] cluster site. The tract at residues 185–201 (CKPEPGKKKRACKNCTC) is fe-S binding site A. The [4Fe-4S] cluster site is built by cysteine 244, cysteine 247, cysteine 255, and cysteine 258. 2 short sequence motifs (cx2C motif) span residues 244 to 247 (CGNC) and 255 to 258 (CSGC). Residues 244 to 258 (CGNCYLGDAFRCSGC) are fe-S binding site B.

It belongs to the anamorsin family. In terms of assembly, monomer. Interacts with tah18. Interacts with tim40. It depends on [2Fe-2S] cluster as a cofactor. The cofactor is [4Fe-4S] cluster.

The protein resides in the cytoplasm. It is found in the mitochondrion intermembrane space. Component of the cytosolic iron-sulfur (Fe-S) protein assembly (CIA) machinery required for the maturation of extramitochondrial Fe-S proteins. Part of an electron transfer chain functioning in an early step of cytosolic Fe-S biogenesis, facilitating the de novo assembly of a [4Fe-4S] cluster on the scaffold complex cfd1-nbp35. Electrons are transferred to dre2 from NADPH via the FAD- and FMN-containing protein tah18. Tah18-dre2 are also required for the assembly of the diferric tyrosyl radical cofactor of ribonucleotide reductase (RNR), probably by providing electrons for reduction during radical cofactor maturation in the catalytic small subunit suc22. This Schizosaccharomyces pombe (strain 972 / ATCC 24843) (Fission yeast) protein is Fe-S cluster assembly protein dre2.